The chain runs to 426 residues: Gamma-glutamyl phosphate reductase (426 aa).

Belongs to the gamma-glutamyl phosphate reductase family.

The protein resides in the cytoplasm. The catalysed reaction is L-glutamate 5-semialdehyde + phosphate + NADP(+) = L-glutamyl 5-phosphate + NADPH + H(+). It participates in amino-acid biosynthesis; L-proline biosynthesis; L-glutamate 5-semialdehyde from L-glutamate: step 2/2. In terms of biological role, catalyzes the NADPH-dependent reduction of L-glutamate 5-phosphate into L-glutamate 5-semialdehyde and phosphate. The product spontaneously undergoes cyclization to form 1-pyrroline-5-carboxylate. The chain is Gamma-glutamyl phosphate reductase from Cupriavidus pinatubonensis (strain JMP 134 / LMG 1197) (Cupriavidus necator (strain JMP 134)).